Reading from the N-terminus, the 639-residue chain is Polyphenol oxidase, chloroplastic (639 aa).

A chloroplast-targeting transit peptide spans 1–101 (MATLSSPTII…EGANYYNTLA (101 aa)). Residues 35 to 58 (GVRSVNGKVSCQTKNNNGNDENNQ) are disordered. 2 cysteine pairs are disulfide-bonded: C111-C127 and C126-C194. Residues H193, H214, H223, H354, H358, and H388 each contribute to the Cu cation site. Positions 197 to 214 (CDGSYPVLGHNDTRLEVH) form a cross-link, 2'-(S-cysteinyl)-histidine (Cys-His).

Belongs to the tyrosinase family. Requires Cu(2+) as cofactor.

It localises to the plastid. The protein resides in the chloroplast thylakoid lumen. The catalysed reaction is 2 catechol + O2 = 2 1,2-benzoquinone + 2 H2O. Functionally, catalyzes the oxidation of mono- and o-diphenols to o-diquinones. This is Polyphenol oxidase, chloroplastic from Spinacia oleracea (Spinach).